The chain runs to 502 residues: MIRVEDASIGTVWVTCLLAVGLYFIRSRLLSDQFAGFPSVNSRKPWEVLNVFAHRRFQQNGPEYLKAGFAKSPVFGVVTDLGPKLVVSGAFIEDFKDEKLLDHYRAMVEDFMAEVPGFESMFLGNLHNTVLRDVISVITRELDQFTLPLSDEVSTALGDTWSDSPDWTEVTLLPSMLGLIARVSSLIFVGEPLCRDPAWLETVVNFTIVRHQAILALHMCPAVLRPVLHWFLPPCQKLRREIKTARSLINSALEELRKNPPTDRFSSLAWVDAFASGKKYDATMVQLRLANASIHSSADLLAKVLINLCEQPGLIQDLRDEVISVLEENGWRASTLNQLKLLDSVLKESQRLHPITTGTFSRFTRQNIKLTNGTEIPTGTPVMVTNDVAGDAAIYPDPEVFDGYRYLRMREGADKARAPFTTTGQNHLGFGYGKYACPGRFFAATEIKIALCHMLLKYEWRLVKDSPHDMLTSGFASFRDPRARIEVRRRAPDPQEVVLTIK.

Residues glutamate 5–isoleucine 25 traverse the membrane as a helical segment. 3 N-linked (GlcNAc...) asparagine glycosylation sites follow: asparagine 205, asparagine 291, and asparagine 372. A heme-binding site is contributed by cysteine 437.

It belongs to the cytochrome P450 family. Heme is required as a cofactor.

The protein resides in the membrane. It participates in secondary metabolite biosynthesis; terpenoid biosynthesis. Functionally, cytochrome P450 monooxygenase; part of the gene cluster that mediates the biosynthesis of pyripyropene A, a specific human acyl-coenzyme A:cholesterol acyltransferase 2 inhibitor. The first step of the pathway is the synthesis of nicotinyl-CoA from nicotinic acid by the nicotinic acid-CoA ligase pyr1. Nicotinyl-CoA is then a substrate of polyketide synthase pyr2 to produce 4-hydroxy-6-(3-pyridinyl)-2H-pyran-2-one (HPPO) which is further prenylated by the polyprenyl transferase pyr6 to yield farnesyl-HPPO. The next steps consist of an epoxidation of farnesyl-HPPO to epoxyfarnesyl-HPPO by FAD-dependent monooxygenase pyr5 and a cyclization of the terpenoid portion by the terpene cyclase pyr4 to yield deacetyl-pyripyropene E. The 2 cytochrome P450 monooxygenases pyr3 and pyr9, and the 2 acetyltransferases pyr7 and pyr8 are involved in the conversion of deacetyl-pyripyropene E into pyripyropene A through several cycles of oxidation and acetylation steps. Pyr7 acetylates deacetyl-pyripyropene E to pyripyropene E which is oxidized to 11-deacetyl-pyripyropene O by pyr3, which is in turn acetylated into pyripyropene O by pyr8. Pyripyropene O is then oxidized to deacetyl-pyripyropene A by pyr9. Deacetyl-pyripyropene A is finally acetylated to pyripyropene A by pyr8. The polypeptide is Cytochrome P450 monooxygenase pyr9 (Aspergillus fumigatus (strain ATCC MYA-4609 / CBS 101355 / FGSC A1100 / Af293) (Neosartorya fumigata)).